The following is a 535-amino-acid chain: Nuclear/nucleolar GTPase 2 (535 aa).

Residues 1 to 42 (MAKKKERAVNVSGKPRHSLDVNRANDKKGAGGGAGGGGGGRS) form a disordered region. A compositionally biased stretch (basic and acidic residues) spans 17-29 (HSLDVNRANDKKG). A compositionally biased stretch (gly residues) spans 30 to 41 (AGGGAGGGGGGR). Residues 213-374 (WGELYKVIDS…LIDCPGVVYQ (162 aa)) form the CP-type G domain. The tract at residues 261–264 (NKCD) is G4. The tract at residues 290–292 (SIN) is G5. Positions 323–330 (GYPNVGKS) are G1. The tract at residues 349 to 353 (GETKV) is G2. The G3 stretch occupies residues 367 to 370 (DCPG). The interval 464 to 494 (FFVPPPQQGEDSPSETAEPVEKSDEEGVSSD) is disordered.

The protein belongs to the TRAFAC class YlqF/YawG GTPase family. RsgA subfamily. Interacts (via N-terminus) with the 60S ribosomal proteins RPL10A. This interaction is enhanced by the addition of GTP. In terms of tissue distribution, expressed in roots, shoot apical meristem, leaves, leaf sheaths and flowers.

It is found in the nucleus. The protein resides in the nucleolus. With respect to regulation, the GTPase activity is stimulated in the presence of ribosomes, particularly of the 60S subunit. Functionally, GTPase involved in pre-60S ribosomal subunit maturation. This is Nuclear/nucleolar GTPase 2 from Oryza sativa subsp. japonica (Rice).